We begin with the raw amino-acid sequence, 297 residues long: Transcription factor bHLH129 (297 aa).

Residues 1–145 are disordered; the sequence is MYPPNSSKST…SSSHQEHNSL (145 aa). A Phosphoserine modification is found at Ser-35. A compositionally biased stretch (low complexity) spans 68 to 82; it reads SSIGFDSNASSSSSL. Residues 111 to 121 show a composition bias toward gly residues; sequence PNGGYGGGGEQ. Ser-138 is subject to Phosphoserine. Residues 239–289 enclose the bHLH domain; sequence FATHPRSIAERERRTRISGKLKKLQELVPNMDKQTSYADMLDLAVEHIKGL.

Homodimer.

Its subcellular location is the nucleus. This Arabidopsis thaliana (Mouse-ear cress) protein is Transcription factor bHLH129 (BHLH129).